Consider the following 337-residue polypeptide: MADRYILAVESSCDETSVAVLKNEKELLSNIIASQVESHKRFGGVVPEVASRHHVEVVTLCIKDALSEAGIVAEQLDAVAVTYGPGLVGALLVGMAAAKAFAWAHGLPLIPVNHMAGHLMAAREVQELEYPLLALLVSGGHTELVYVSEPGNYKIVGETRDDAVGEAYDKVGRVMGLTYPAGREIDELAHKGKDVYDFPRAMIKEDHLEFSFSGLKSAFINLHHNAEQKGEVLVTEDLCASFQAAVLDILLAKTKKALERYPVKTLVVAGGVAANQGLRERLAEEITDVDVVIPPLRLCGDNAGMIALAAAIECDKKHFADLDLNAKPSLAFAGFEE.

2 residues coordinate Fe cation: His114 and His118. Substrate-binding positions include 136–140 (LVSGG), Asp169, Gly182, Asp186, and Asn275. Position 301 (Asp301) interacts with Fe cation.

Belongs to the KAE1 / TsaD family. Fe(2+) is required as a cofactor.

Its subcellular location is the cytoplasm. The catalysed reaction is L-threonylcarbamoyladenylate + adenosine(37) in tRNA = N(6)-L-threonylcarbamoyladenosine(37) in tRNA + AMP + H(+). Required for the formation of a threonylcarbamoyl group on adenosine at position 37 (t(6)A37) in tRNAs that read codons beginning with adenine. Is involved in the transfer of the threonylcarbamoyl moiety of threonylcarbamoyl-AMP (TC-AMP) to the N6 group of A37, together with TsaE and TsaB. TsaD likely plays a direct catalytic role in this reaction. This chain is tRNA N6-adenosine threonylcarbamoyltransferase, found in Streptococcus thermophilus (strain CNRZ 1066).